The chain runs to 295 residues: uncharacterized protein (295 aa).

2 disordered regions span residues Val-33–Ser-52 and Leu-180–Lys-295. The residue at position 50 (Ser-50) is a Phosphoserine. Composition is skewed to polar residues over residues Gln-205 to Ile-217 and Thr-241 to Pro-251. Residues Glu-267–Pro-276 are compositionally biased toward acidic residues. Over residues Glu-277 to Ser-289 the composition is skewed to low complexity.

This is an uncharacterized protein from Homo sapiens (Human).